We begin with the raw amino-acid sequence, 210 residues long: ATP-dependent dethiobiotin synthetase BioD (210 aa).

Position 12 to 17 (12 to 17 (NVGKTH)) interacts with ATP. Threonine 16 serves as a coordination point for Mg(2+). Lysine 37 is an active-site residue. Threonine 41 contacts substrate. Mg(2+) is bound at residue glutamate 114. 114–117 (EGAG) is an ATP binding site.

Belongs to the dethiobiotin synthetase family. As to quaternary structure, homodimer. Mg(2+) serves as cofactor.

It is found in the cytoplasm. It catalyses the reaction (7R,8S)-7,8-diammoniononanoate + CO2 + ATP = (4R,5S)-dethiobiotin + ADP + phosphate + 3 H(+). The protein operates within cofactor biosynthesis; biotin biosynthesis; biotin from 7,8-diaminononanoate: step 1/2. In terms of biological role, catalyzes a mechanistically unusual reaction, the ATP-dependent insertion of CO2 between the N7 and N8 nitrogen atoms of 7,8-diaminopelargonic acid (DAPA, also called 7,8-diammoniononanoate) to form a ureido ring. The protein is ATP-dependent dethiobiotin synthetase BioD of Sulfurovum sp. (strain NBC37-1).